A 327-amino-acid polypeptide reads, in one-letter code: Undecaprenyl-phosphate 4-deoxy-4-formamido-L-arabinose transferase (327 aa).

Residues 1–235 lie on the Cytoplasmic side of the membrane; the sequence is MFDAAPIKKV…TCLTTTPLRL (235 aa). Residues 236–256 form a helical membrane-spanning segment; that stretch reads LSLLGSVIAIGGFSLSVLLIV. Residues 257–269 are Periplasmic-facing; it reads LRLALGPQWAAEG. Residues 270–290 traverse the membrane as a helical segment; that stretch reads VFMLFAVLFTFIGAQFIGMGL. At 291-327 the chain is on the cytoplasmic side; sequence LGEYIGRIYNDVRARPRYFVQQVIYPESTPFTEESHQ.

It belongs to the glycosyltransferase 2 family.

It localises to the cell inner membrane. The catalysed reaction is UDP-4-deoxy-4-formamido-beta-L-arabinose + di-trans,octa-cis-undecaprenyl phosphate = 4-deoxy-4-formamido-alpha-L-arabinopyranosyl di-trans,octa-cis-undecaprenyl phosphate + UDP. It functions in the pathway glycolipid biosynthesis; 4-amino-4-deoxy-alpha-L-arabinose undecaprenyl phosphate biosynthesis; 4-amino-4-deoxy-alpha-L-arabinose undecaprenyl phosphate from UDP-4-deoxy-4-formamido-beta-L-arabinose and undecaprenyl phosphate: step 1/2. Its pathway is bacterial outer membrane biogenesis; lipopolysaccharide biosynthesis. Its function is as follows. Catalyzes the transfer of 4-deoxy-4-formamido-L-arabinose from UDP to undecaprenyl phosphate. The modified arabinose is attached to lipid A and is required for resistance to polymyxin and cationic antimicrobial peptides. This is Undecaprenyl-phosphate 4-deoxy-4-formamido-L-arabinose transferase from Salmonella choleraesuis (strain SC-B67).